We begin with the raw amino-acid sequence, 546 residues long: Chaperonin GroEL (546 aa).

ATP is bound by residues T30–P33, K51, D87–T91, G415, N479–A481, and D495.

It belongs to the chaperonin (HSP60) family. As to quaternary structure, forms a cylinder of 14 subunits composed of two heptameric rings stacked back-to-back. Interacts with the co-chaperonin GroES.

It is found in the cytoplasm. It catalyses the reaction ATP + H2O + a folded polypeptide = ADP + phosphate + an unfolded polypeptide.. In terms of biological role, together with its co-chaperonin GroES, plays an essential role in assisting protein folding. The GroEL-GroES system forms a nano-cage that allows encapsulation of the non-native substrate proteins and provides a physical environment optimized to promote and accelerate protein folding. This Pseudomonas putida (strain ATCC 47054 / DSM 6125 / CFBP 8728 / NCIMB 11950 / KT2440) protein is Chaperonin GroEL.